We begin with the raw amino-acid sequence, 433 residues long: Methylenetetrahydrofolate--tRNA-(uracil-5-)-methyltransferase TrmFO (433 aa).

8–13 (GAGLAG) serves as a coordination point for FAD.

Belongs to the MnmG family. TrmFO subfamily. FAD is required as a cofactor.

It is found in the cytoplasm. It carries out the reaction uridine(54) in tRNA + (6R)-5,10-methylene-5,6,7,8-tetrahydrofolate + NADH + H(+) = 5-methyluridine(54) in tRNA + (6S)-5,6,7,8-tetrahydrofolate + NAD(+). It catalyses the reaction uridine(54) in tRNA + (6R)-5,10-methylene-5,6,7,8-tetrahydrofolate + NADPH + H(+) = 5-methyluridine(54) in tRNA + (6S)-5,6,7,8-tetrahydrofolate + NADP(+). Its function is as follows. Catalyzes the folate-dependent formation of 5-methyl-uridine at position 54 (M-5-U54) in all tRNAs. This chain is Methylenetetrahydrofolate--tRNA-(uracil-5-)-methyltransferase TrmFO, found in Carboxydothermus hydrogenoformans (strain ATCC BAA-161 / DSM 6008 / Z-2901).